We begin with the raw amino-acid sequence, 961 residues long: Exportin-T (961 aa).

Belongs to the exportin family.

The protein resides in the cytoplasm. It is found in the nucleus. In terms of biological role, mediates the nuclear export of aminoacylated tRNAs. The polypeptide is Exportin-T (xpot) (Danio rerio (Zebrafish)).